The following is a 233-amino-acid chain: Large ribosomal subunit protein mL67 (233 aa).

The disordered stretch occupies residues 214 to 233; it reads RQQAQQSEQQSQSELESQTA. Over residues 215–233 the composition is skewed to low complexity; the sequence is QQAQQSEQQSQSELESQTA.

It belongs to the mitochondrion-specific ribosomal protein mL67 family.

It localises to the nucleus. Its subcellular location is the mitochondrion. Transcription factor involved in regulation of RNA polymerase II-dependent transcription. Also involved in regulation of mitochondrial DNA recombination, maintenance and repair, and generation of homoplasmic cells. The protein is Large ribosomal subunit protein mL67 (MHR1) of Debaryomyces hansenii (strain ATCC 36239 / CBS 767 / BCRC 21394 / JCM 1990 / NBRC 0083 / IGC 2968) (Yeast).